An 88-amino-acid chain; its full sequence is Putative membrane protein insertion efficiency factor (88 aa).

Residues 64–88 (GVDPVPKKSSSKKTSSTTACGCGHS) form a disordered region.

It belongs to the UPF0161 family.

The protein localises to the cell inner membrane. Could be involved in insertion of integral membrane proteins into the membrane. The chain is Putative membrane protein insertion efficiency factor from Herminiimonas arsenicoxydans.